We begin with the raw amino-acid sequence, 197 residues long: MPTPTKGPRLGGGPAHERLMLANLATALFEHERITTTEAKAKRLRPLAERLITFAKRGDLASRRRVLTVVKDKGVVHTLFTEIAPAMAERPGGYTRITKVGPRKGDNAPMAVIELVLEPLSPKQATVAEATAATKRAAKKADAPQEPVADEATDADESVEDEAPAQDDSADEVEAAADETPADDAEADAEKSSDTEK.

The segment at 136-197 is disordered; it reads RAAKKADAPQ…DAEKSSDTEK (62 aa). The span at 148-187 shows a compositional bias: acidic residues; sequence VADEATDADESVEDEAPAQDDSADEVEAAADETPADDAEA. Residues 188–197 show a composition bias toward basic and acidic residues; sequence DAEKSSDTEK.

This sequence belongs to the bacterial ribosomal protein bL17 family. In terms of assembly, part of the 50S ribosomal subunit. Contacts protein L32.

This chain is Large ribosomal subunit protein bL17, found in Beutenbergia cavernae (strain ATCC BAA-8 / DSM 12333 / CCUG 43141 / JCM 11478 / NBRC 16432 / NCIMB 13614 / HKI 0122).